The sequence spans 158 residues: Phosphopantetheine adenylyltransferase (158 aa).

Substrate is bound at residue S9. Residues 9–10 (SF) and H17 contribute to the ATP site. The substrate site is built by K41, V73, and K87. ATP-binding positions include 88 to 90 (GLR), E98, and 122 to 128 (YSFVSSS).

The protein belongs to the bacterial CoaD family. Homohexamer. It depends on Mg(2+) as a cofactor.

The protein resides in the cytoplasm. The catalysed reaction is (R)-4'-phosphopantetheine + ATP + H(+) = 3'-dephospho-CoA + diphosphate. Its pathway is cofactor biosynthesis; coenzyme A biosynthesis; CoA from (R)-pantothenate: step 4/5. Functionally, reversibly transfers an adenylyl group from ATP to 4'-phosphopantetheine, yielding dephospho-CoA (dPCoA) and pyrophosphate. The sequence is that of Phosphopantetheine adenylyltransferase from Mycobacterium sp. (strain JLS).